We begin with the raw amino-acid sequence, 1058 residues long: DNA primase (1058 aa).

The CHC2-type zinc-finger motif lies at 988–1028 (CLRFKHGRASRATARTFVALSVGANNRLCVSLCQQCFAAKC).

This sequence belongs to the herpesviridae DNA primase family. Associates with the helicase and the primase-associated factor to form the helicase-primase factor.

The protein resides in the host nucleus. Its function is as follows. Essential component of the helicase/primase complex. Unwinds the DNA at the replication forks and generates single-stranded DNA for both leading and lagging strand synthesis. The primase initiates primer synthesis and thereby produces large amount of short RNA primers on the lagging strand that the polymerase elongates using dNTPs. This chain is DNA primase, found in Homo sapiens (Human).